The sequence spans 316 residues: L-lactate dehydrogenase 3 (316 aa).

NAD(+) is bound by residues valine 16, aspartate 37, arginine 42, and tyrosine 68. Position 91 (arginine 91) interacts with substrate. Residues serine 104, 121-123 (ASN), and threonine 146 contribute to the NAD(+) site. 123-126 (NPVD) is a substrate binding site. 151–154 (DSSR) serves as a coordination point for substrate. Residues arginine 156 and histidine 171 each coordinate beta-D-fructose 1,6-bisphosphate. The active-site Proton acceptor is histidine 178. Threonine 233 contacts substrate.

Belongs to the LDH/MDH superfamily. LDH family. In terms of assembly, homotetramer.

It is found in the cytoplasm. It carries out the reaction (S)-lactate + NAD(+) = pyruvate + NADH + H(+). It functions in the pathway fermentation; pyruvate fermentation to lactate; (S)-lactate from pyruvate: step 1/1. Its activity is regulated as follows. Allosterically activated by fructose 1,6-bisphosphate (FBP). Its function is as follows. Catalyzes the conversion of lactate to pyruvate. The chain is L-lactate dehydrogenase 3 from Bacillus cereus (strain ATCC 10987 / NRS 248).